Consider the following 298-residue polypeptide: 4-hydroxy-tetrahydrodipicolinate synthase (298 aa).

Position 51 (Thr-51) interacts with pyruvate. Residue Tyr-139 is the Proton donor/acceptor of the active site. The active-site Schiff-base intermediate with substrate is the Lys-167. Ile-209 contributes to the pyruvate binding site.

The protein belongs to the DapA family. In terms of assembly, homotetramer; dimer of dimers.

The protein resides in the cytoplasm. The catalysed reaction is L-aspartate 4-semialdehyde + pyruvate = (2S,4S)-4-hydroxy-2,3,4,5-tetrahydrodipicolinate + H2O + H(+). Its pathway is amino-acid biosynthesis; L-lysine biosynthesis via DAP pathway; (S)-tetrahydrodipicolinate from L-aspartate: step 3/4. Catalyzes the condensation of (S)-aspartate-beta-semialdehyde [(S)-ASA] and pyruvate to 4-hydroxy-tetrahydrodipicolinate (HTPA). The sequence is that of 4-hydroxy-tetrahydrodipicolinate synthase from Haemophilus influenzae (strain 86-028NP).